Here is a 97-residue protein sequence, read N- to C-terminus: Large ribosomal subunit protein uL23 (97 aa).

This sequence belongs to the universal ribosomal protein uL23 family. Part of the 50S ribosomal subunit. Contacts protein L29, and trigger factor when it is bound to the ribosome.

In terms of biological role, one of the early assembly proteins it binds 23S rRNA. One of the proteins that surrounds the polypeptide exit tunnel on the outside of the ribosome. Forms the main docking site for trigger factor binding to the ribosome. This is Large ribosomal subunit protein uL23 from Anaeromyxobacter dehalogenans (strain 2CP-C).